We begin with the raw amino-acid sequence, 342 residues long: Fructose-1,6-bisphosphatase class 1 (342 aa).

Positions 97, 119, 121, and 122 each coordinate Mg(2+). Residues 122–125, Asn-215, Tyr-247, and Lys-280 contribute to the substrate site; that span reads DGSS. Glu-286 provides a ligand contact to Mg(2+).

The protein belongs to the FBPase class 1 family. In terms of assembly, homotetramer. The cofactor is Mg(2+).

The protein resides in the cytoplasm. It carries out the reaction beta-D-fructose 1,6-bisphosphate + H2O = beta-D-fructose 6-phosphate + phosphate. Its pathway is carbohydrate biosynthesis; gluconeogenesis. This chain is Fructose-1,6-bisphosphatase class 1, found in Leptospira borgpetersenii serovar Hardjo-bovis (strain JB197).